The primary structure comprises 118 residues: Small ribosomal subunit protein uS13 (118 aa).

Residues 92-118 (RRNLPVRGQNTKNNARTRKGPTRPLKR) are disordered. Over residues 106 to 118 (ARTRKGPTRPLKR) the composition is skewed to basic residues.

The protein belongs to the universal ribosomal protein uS13 family. As to quaternary structure, part of the 30S ribosomal subunit. Forms a loose heterodimer with protein S19. Forms two bridges to the 50S subunit in the 70S ribosome.

Located at the top of the head of the 30S subunit, it contacts several helices of the 16S rRNA. In the 70S ribosome it contacts the 23S rRNA (bridge B1a) and protein L5 of the 50S subunit (bridge B1b), connecting the 2 subunits; these bridges are implicated in subunit movement. Contacts the tRNAs in the A and P-sites. In Psychrobacter arcticus (strain DSM 17307 / VKM B-2377 / 273-4), this protein is Small ribosomal subunit protein uS13.